Here is a 227-residue protein sequence, read N- to C-terminus: UPF0758 protein LPC_1989 (227 aa).

One can recognise an MPN domain in the interval 102–225 (QLSNTQQTYA…YSIFAENKWV (124 aa)). Zn(2+)-binding residues include His-173, His-175, and Asp-186. The short motif at 173–186 (HNHPSGLSDASQQD) is the JAMM motif element.

Belongs to the UPF0758 family.

This Legionella pneumophila (strain Corby) protein is UPF0758 protein LPC_1989.